The primary structure comprises 127 residues: Dual endothelin-1/VEGF signal peptide receptor (127 aa).

The Extracellular segment spans residues 1-69 (MSTFYVTAVP…EMKSRWNWGS (69 aa)). A helical transmembrane segment spans residues 70–88 (ITCIMCFTCVGSQLSMSSS). At 89-127 (KASNFSGPLQLYQRGIGHITNPYRRPPAPAWPCSSSGTT) the chain is on the cytoplasmic side.

As to expression, prominently expressed in brain and heart tissues. Weakly expressed in aorta, adrenal gland, and lung tissues.

Its subcellular location is the cell membrane. In the Dahl salt-resistant strain, acts as a dual receptor for both endothelin-1 and the signal sequence of vascular endothelial growth factor A and does not act as a receptor for angiotensin-2. Does not bind the VEGFA mature protein. In the Dahl salt-sensitive strain, acts as a dual endothelin-1/angiotensin-2 receptor that is functionally coupled to a calcium-mobilizing transduction system, responding equivalently to both endothelin-1/EDN1 and angiotensin-2 peptides in a highly specific manner. May play a role in angiogenesis with a significant role in cardiovascular and neural development. This Rattus norvegicus (Rat) protein is Dual endothelin-1/VEGF signal peptide receptor.